We begin with the raw amino-acid sequence, 850 residues long: Transcription initiation factor TFIID subunit 4B (850 aa).

The sufficient for interaction with ZNF628 stretch occupies residues 99–240 (GTTTIQLPAN…TPSNDARLKA (142 aa)). One can recognise a TAFH domain in the interval 256–353 (ENVKKCKNFL…VKEVSGDVVI (98 aa)). The tract at residues 504–526 (PSTLLPQAAGIPQTAKVKQLVVQ) is required for interaction with P65/RELA. The Nuclear export signal signature appears at 509–549 (PQAAGIPQTAKVKQLVVQQPSGSSVNHVTSISHSSPLSTQN). Serine 584 carries the phosphoserine modification. Positions 642-691 (PFLVIGALQKRILDIGKKHDITELNSDAVNLISHATQERLRGLLEKLTTI) constitute a Histone-fold domain. Residues 788–812 (KRPLESGNESFKDNPSTSGTSSLTA) are disordered. A compositionally biased stretch (polar residues) spans 794-812 (GNESFKDNPSTSGTSSLTA). The required for interaction with TAF12 stretch occupies residues 818 to 850 (PRITRICLRDLIFCMEQEREMKYSRALYLALLK).

It belongs to the TAF4 family. In terms of assembly, TFIID is composed of TATA binding protein (TBP) and a number of TBP-associated factors (TAFs). Heterodimerizes with TAF12/TFII20 via the C-terminal H2A-like histone-fold domain. This heterodimer forms a histone-like octamer with the TAF6/TAFII70-TAF9/TAFII31 heterodimer. Interacts with P65/RELA homodimers and P65/RELA-REL heterodimers. Interaction with POU2AF1, via its C-terminal activation domain, is required for octamer-dependent transcription. Interacts with ZNF628. As to expression, highly expressed in the testes and ovary, whereas lower levels are detected in most other tissues.

The protein resides in the nucleus. It is found in the cytoplasm. Its function is as follows. Cell type-specific subunit of the general transcription factor TFIID that may function as a gene-selective coactivator in certain cells. TFIID is a multimeric protein complex that plays a central role in mediating promoter responses to various activators asond repressors. TAF4B is a transcriptional coactivator of the p65/RELA NF-kappa-B subunit. Involved in the activation of a subset of antiapoptotic genes including TNFAIP3. Through interaction with OCBA/POU2AF1, acts as a coactivator of B-cell-specific transcription. Plays a role in spermiogenesis and oogenesis. The protein is Transcription initiation factor TFIID subunit 4B (Taf4b) of Mus musculus (Mouse).